We begin with the raw amino-acid sequence, 251 residues long: Small ribosomal subunit protein uS4c (251 aa).

S4 RNA-binding domains lie at 110-170 (MRLD…KLVN) and 189-251 (RTLA…QFSE).

Belongs to the universal ribosomal protein uS4 family. As to quaternary structure, part of the 30S ribosomal subunit. Contacts protein S5. The interaction surface between S4 and S5 is involved in control of translational fidelity.

Its subcellular location is the plastid. The protein localises to the chloroplast. Functionally, one of the primary rRNA binding proteins, it binds directly to 16S rRNA where it nucleates assembly of the body of the 30S subunit. With S5 and S12 plays an important role in translational accuracy. The protein is Small ribosomal subunit protein uS4c (rps4) of Tetradesmus obliquus (Green alga).